We begin with the raw amino-acid sequence, 380 residues long: Elongation factor Ts, mitochondrial (380 aa).

The protein belongs to the EF-Ts family.

It is found in the mitochondrion. Associates with the EF-Tu.GDP complex and induces the exchange of GDP to GTP. It remains bound to the aminoacyl-tRNA.EF-Tu.GTP complex up to the GTP hydrolysis stage on the ribosome. This Plasmodium chabaudi chabaudi protein is Elongation factor Ts, mitochondrial.